Here is a 173-residue protein sequence, read N- to C-terminus: Orotate phosphoribosyltransferase (173 aa).

5-phospho-alpha-D-ribose 1-diphosphate-binding positions include arginine 87, lysine 88, lysine 91, and 113-121 (EDIATTGQS). Threonine 117 and arginine 145 together coordinate orotate.

Belongs to the purine/pyrimidine phosphoribosyltransferase family. PyrE subfamily. In terms of assembly, homodimer. The cofactor is Mg(2+).

It catalyses the reaction orotidine 5'-phosphate + diphosphate = orotate + 5-phospho-alpha-D-ribose 1-diphosphate. The protein operates within pyrimidine metabolism; UMP biosynthesis via de novo pathway; UMP from orotate: step 1/2. In terms of biological role, catalyzes the transfer of a ribosyl phosphate group from 5-phosphoribose 1-diphosphate to orotate, leading to the formation of orotidine monophosphate (OMP). The polypeptide is Orotate phosphoribosyltransferase (Natronomonas pharaonis (strain ATCC 35678 / DSM 2160 / CIP 103997 / JCM 8858 / NBRC 14720 / NCIMB 2260 / Gabara) (Halobacterium pharaonis)).